We begin with the raw amino-acid sequence, 122 residues long: Large ribosomal subunit protein uL14c (122 aa).

Belongs to the universal ribosomal protein uL14 family. As to quaternary structure, part of the 50S ribosomal subunit.

The protein resides in the plastid. It localises to the chloroplast. Functionally, binds to 23S rRNA. This is Large ribosomal subunit protein uL14c from Liriodendron tulipifera (Tuliptree).